Here is a 377-residue protein sequence, read N- to C-terminus: Chaperone protein DnaJ (377 aa).

In terms of domain architecture, J spans 5 to 70; the sequence is DYYEILGVER…EKRAAYDQYG (66 aa). Residues 134–212 form a CR-type zinc finger; the sequence is GITKDIQIQT…CHGDGRVHKT (79 aa). 8 residues coordinate Zn(2+): cysteine 147, cysteine 150, cysteine 164, cysteine 167, cysteine 186, cysteine 189, cysteine 200, and cysteine 203. CXXCXGXG motif repeat units follow at residues 147 to 154, 164 to 171, 186 to 193, and 200 to 207; these read CDHCNGSG, CPTCHGHG, CPHCHGTG, and CKKCHGDG.

This sequence belongs to the DnaJ family. As to quaternary structure, homodimer. Zn(2+) is required as a cofactor.

The protein localises to the cytoplasm. Participates actively in the response to hyperosmotic and heat shock by preventing the aggregation of stress-denatured proteins and by disaggregating proteins, also in an autonomous, DnaK-independent fashion. Unfolded proteins bind initially to DnaJ; upon interaction with the DnaJ-bound protein, DnaK hydrolyzes its bound ATP, resulting in the formation of a stable complex. GrpE releases ADP from DnaK; ATP binding to DnaK triggers the release of the substrate protein, thus completing the reaction cycle. Several rounds of ATP-dependent interactions between DnaJ, DnaK and GrpE are required for fully efficient folding. Also involved, together with DnaK and GrpE, in the DNA replication of plasmids through activation of initiation proteins. The polypeptide is Chaperone protein DnaJ (Actinobacillus succinogenes (strain ATCC 55618 / DSM 22257 / CCUG 43843 / 130Z)).